A 238-amino-acid polypeptide reads, in one-letter code: Probable transcriptional regulatory protein YeeN (238 aa).

This sequence belongs to the TACO1 family. YeeN subfamily.

The protein localises to the cytoplasm. The chain is Probable transcriptional regulatory protein YeeN from Escherichia coli (strain UTI89 / UPEC).